Consider the following 219-residue polypeptide: Leukocyte surface antigen CD53 (219 aa).

The Cytoplasmic segment spans residues 2–11 (GMSSLKLLKY). A helical transmembrane segment spans residues 12-32 (VLFFFNFLFWVCGCCILGFGI). Residues 33-54 (HLLVQNTYGILFRNLPFLTLGN) lie on the Extracellular side of the membrane. The helical transmembrane segment at 55–69 (VLVIVGSIIMVVAFL) threads the bilayer. At 70–80 (GCMGSIKENKC) the chain is on the cytoplasmic side. A helical membrane pass occupies residues 81-106 (LLMSFFVLLLLILLAEVTLAILLFVY). The Extracellular segment spans residues 107–181 (EKKINTLVAE…KKGQAWFHSN (75 aa)). N-linked (GlcNAc...) asparagine glycans are attached at residues N119, N129, and N148. The helical transmembrane segment at 182 to 206 (FLYIGIVTICVCVIQVLGMSFALTL) threads the bilayer. Topologically, residues 207–219 (NCQIDKTSQALGL) are cytoplasmic.

This sequence belongs to the tetraspanin (TM4SF) family. In terms of assembly, interacts with SCIMP. Interacts with CD45/PTPRC. Interacts with IL7R. Interacts with RBL2 and PPP2CA. In terms of tissue distribution, spleen and thymus, B-cells, monocytes, macrophages, neutrophils, single (CD4 or CD8) positive thymocytes, peripheral T-cells.

The protein localises to the cell membrane. The protein resides in the cell junction. It is found in the membrane. In terms of biological role, required for efficient formation of myofibers in regenerating muscle at the level of cell fusion. May be involved in growth regulation in hematopoietic cells. This Rattus norvegicus (Rat) protein is Leukocyte surface antigen CD53 (Cd53).